The primary structure comprises 87 residues: Small ribosomal subunit protein bS18 (87 aa).

The protein belongs to the bacterial ribosomal protein bS18 family. In terms of assembly, part of the 30S ribosomal subunit. Forms a tight heterodimer with protein bS6.

Functionally, binds as a heterodimer with protein bS6 to the central domain of the 16S rRNA, where it helps stabilize the platform of the 30S subunit. This chain is Small ribosomal subunit protein bS18, found in Campylobacter hominis (strain ATCC BAA-381 / DSM 21671 / CCUG 45161 / LMG 19568 / NCTC 13146 / CH001A).